A 450-amino-acid chain; its full sequence is Adenylosuccinate lyase (450 aa).

Residues 9–10 (RY), 75–77 (HHD), and 101–102 (TS) each bind N(6)-(1,2-dicarboxyethyl)-AMP. The active-site Proton donor/acceptor is the histidine 149. Residue glutamine 223 coordinates N(6)-(1,2-dicarboxyethyl)-AMP. Serine 273 functions as the Proton donor/acceptor in the catalytic mechanism. Residues serine 274, 279–281 (KRN), and 318–322 (SVERV) each bind N(6)-(1,2-dicarboxyethyl)-AMP.

This sequence belongs to the lyase 1 family. Adenylosuccinate lyase subfamily. In terms of assembly, homotetramer. Residues from neighboring subunits contribute catalytic and substrate-binding residues to each active site.

It catalyses the reaction N(6)-(1,2-dicarboxyethyl)-AMP = fumarate + AMP. The enzyme catalyses (2S)-2-[5-amino-1-(5-phospho-beta-D-ribosyl)imidazole-4-carboxamido]succinate = 5-amino-1-(5-phospho-beta-D-ribosyl)imidazole-4-carboxamide + fumarate. It functions in the pathway purine metabolism; AMP biosynthesis via de novo pathway; AMP from IMP: step 2/2. Its pathway is purine metabolism; IMP biosynthesis via de novo pathway; 5-amino-1-(5-phospho-D-ribosyl)imidazole-4-carboxamide from 5-amino-1-(5-phospho-D-ribosyl)imidazole-4-carboxylate: step 2/2. In terms of biological role, catalyzes two reactions in de novo purine nucleotide biosynthesis. Catalyzes the breakdown of 5-aminoimidazole- (N-succinylocarboxamide) ribotide (SAICAR or 2-[5-amino-1-(5-phospho-beta-D-ribosyl)imidazole-4-carboxamido]succinate) to 5-aminoimidazole-4-carboxamide ribotide (AICAR or 5-amino-1-(5-phospho-beta-D-ribosyl)imidazole-4-carboxamide) and fumarate, and of adenylosuccinate (ADS or N(6)-(1,2-dicarboxyethyl)-AMP) to adenosine monophosphate (AMP) and fumarate. This Pyrococcus horikoshii (strain ATCC 700860 / DSM 12428 / JCM 9974 / NBRC 100139 / OT-3) protein is Adenylosuccinate lyase (purB).